Consider the following 430-residue polypeptide: Histidine--tRNA ligase (430 aa).

This sequence belongs to the class-II aminoacyl-tRNA synthetase family. As to quaternary structure, homodimer.

Its subcellular location is the cytoplasm. The catalysed reaction is tRNA(His) + L-histidine + ATP = L-histidyl-tRNA(His) + AMP + diphosphate + H(+). This Chlamydia abortus (strain DSM 27085 / S26/3) (Chlamydophila abortus) protein is Histidine--tRNA ligase.